The following is a 494-amino-acid chain: Lysine--tRNA ligase (494 aa).

The Mg(2+) site is built by Glu-407 and Glu-414.

The protein belongs to the class-II aminoacyl-tRNA synthetase family. As to quaternary structure, homodimer. Mg(2+) serves as cofactor.

It is found in the cytoplasm. The enzyme catalyses tRNA(Lys) + L-lysine + ATP = L-lysyl-tRNA(Lys) + AMP + diphosphate. This chain is Lysine--tRNA ligase, found in Lactococcus lactis subsp. cremoris (strain MG1363).